The following is a 403-amino-acid chain: Histidine--tRNA ligase (403 aa).

Belongs to the class-II aminoacyl-tRNA synthetase family. As to quaternary structure, homodimer.

It localises to the cytoplasm. The catalysed reaction is tRNA(His) + L-histidine + ATP = L-histidyl-tRNA(His) + AMP + diphosphate + H(+). This chain is Histidine--tRNA ligase, found in Sulfurimonas denitrificans (strain ATCC 33889 / DSM 1251) (Thiomicrospira denitrificans (strain ATCC 33889 / DSM 1251)).